Reading from the N-terminus, the 1405-residue chain is ATP-dependent helicase/nuclease subunit A (1405 aa).

The UvrD-like helicase ATP-binding domain occupies 7-482 (REWTPDQLAA…ILLKANFRSR (476 aa)). 28–35 (AAAGAGKT) serves as a coordination point for ATP. The 364-residue stretch at 551–914 (PEAVGAGKGG…RVMSIHRAKG (364 aa)) folds into the UvrD-like helicase C-terminal domain. 2 disordered regions span residues 778–797 (QEPW…KAVP) and 1132–1165 (AGKT…QDET). Over residues 787–796 (GPGAAAGKAV) the composition is skewed to low complexity.

The protein belongs to the helicase family. AddA subfamily. As to quaternary structure, heterodimer of AddA and AddB/RexB. Requires Mg(2+) as cofactor.

It catalyses the reaction Couples ATP hydrolysis with the unwinding of duplex DNA by translocating in the 3'-5' direction.. The enzyme catalyses ATP + H2O = ADP + phosphate + H(+). In terms of biological role, the heterodimer acts as both an ATP-dependent DNA helicase and an ATP-dependent, dual-direction single-stranded exonuclease. Recognizes the chi site generating a DNA molecule suitable for the initiation of homologous recombination. The AddA nuclease domain is required for chi fragment generation; this subunit has the helicase and 3' -&gt; 5' nuclease activities. This Moorella thermoacetica (strain ATCC 39073 / JCM 9320) protein is ATP-dependent helicase/nuclease subunit A.